The chain runs to 473 residues: Photosystem II CP43 reaction center protein (473 aa).

Residues 1 to 14 (MKILYSLRRFYHVE) constitute a propeptide that is removed on maturation. Position 15 is an N-acetylthreonine (Thr-15). Thr-15 is subject to Phosphothreonine. Helical transmembrane passes span 69 to 93 (LFEV…PHLA), 134 to 155 (LLGP…KDRN), 178 to 200 (KALY…RKIT), 255 to 275 (KPFA…LSYS), and 291 to 312 (WFNN…ASQA). Glu-367 contributes to the [CaMn4O5] cluster binding site. A helical transmembrane segment spans residues 447–471 (RARAAAAGFEKGIDRDLEPVLYMTP).

The protein belongs to the PsbB/PsbC family. PsbC subfamily. In terms of assembly, PSII is composed of 1 copy each of membrane proteins PsbA, PsbB, PsbC, PsbD, PsbE, PsbF, PsbH, PsbI, PsbJ, PsbK, PsbL, PsbM, PsbT, PsbX, PsbY, PsbZ, Psb30/Ycf12, at least 3 peripheral proteins of the oxygen-evolving complex and a large number of cofactors. It forms dimeric complexes. Binds multiple chlorophylls and provides some of the ligands for the Ca-4Mn-5O cluster of the oxygen-evolving complex. It may also provide a ligand for a Cl- that is required for oxygen evolution. PSII binds additional chlorophylls, carotenoids and specific lipids. is required as a cofactor.

Its subcellular location is the plastid. It is found in the chloroplast thylakoid membrane. In terms of biological role, one of the components of the core complex of photosystem II (PSII). It binds chlorophyll and helps catalyze the primary light-induced photochemical processes of PSII. PSII is a light-driven water:plastoquinone oxidoreductase, using light energy to abstract electrons from H(2)O, generating O(2) and a proton gradient subsequently used for ATP formation. The sequence is that of Photosystem II CP43 reaction center protein from Oryza nivara (Indian wild rice).